The chain runs to 104 residues: Large ribosomal subunit protein uL24 (104 aa).

Belongs to the universal ribosomal protein uL24 family. Part of the 50S ribosomal subunit.

Its function is as follows. One of two assembly initiator proteins, it binds directly to the 5'-end of the 23S rRNA, where it nucleates assembly of the 50S subunit. Functionally, one of the proteins that surrounds the polypeptide exit tunnel on the outside of the subunit. The sequence is that of Large ribosomal subunit protein uL24 from Rhodopseudomonas palustris (strain BisA53).